Here is a 301-residue protein sequence, read N- to C-terminus: MKIAILSRNAKLYSTRRLIEAAEERGHEVRVIDALRCYMNISSNHPQVHYKGEVLDGFDAIIPRIGASITFYGTAVLRQFEMMGVYPLNESVAISRSRDKLRSLQLLSRRGVGLPVTGFAHSPDDVNDLLETVGGAPVVIKLLEGTQGVGVVLADTHSAAESVIQAFNGLKANILVQEFIKEARGADLRCFVIGGKVVASMKRQAKDGEFRSNLHQGGSASLVRITPEERATAVRAAKIMGLNVCGVDLLRSNHGPVVMEVNSSPGIEGIETATQKDIASQIIAFIEKNAKPHNTKTRGKG.

One can recognise an ATP-grasp domain in the interval 104-287 (LQLLSRRGVG…IASQIIAFIE (184 aa)). ATP-binding positions include lysine 141, 178-179 (EF), aspartate 187, and 211-213 (RSN). Residues aspartate 248, glutamate 260, and asparagine 262 each contribute to the Mg(2+) site. Residues aspartate 248, glutamate 260, and asparagine 262 each coordinate Mn(2+).

It belongs to the RimK family. The cofactor is Mg(2+). Mn(2+) serves as cofactor.

In Hydrogenovibrio crunogenus (strain DSM 25203 / XCL-2) (Thiomicrospira crunogena), this protein is Probable alpha-L-glutamate ligase.